The sequence spans 217 residues: Imidazole glycerol phosphate synthase subunit HisH (217 aa).

The Glutamine amidotransferase type-1 domain maps to threonine 3–proline 217. Cysteine 82 serves as the catalytic Nucleophile. Catalysis depends on residues histidine 197 and glutamate 199.

Heterodimer of HisH and HisF.

It is found in the cytoplasm. The enzyme catalyses 5-[(5-phospho-1-deoxy-D-ribulos-1-ylimino)methylamino]-1-(5-phospho-beta-D-ribosyl)imidazole-4-carboxamide + L-glutamine = D-erythro-1-(imidazol-4-yl)glycerol 3-phosphate + 5-amino-1-(5-phospho-beta-D-ribosyl)imidazole-4-carboxamide + L-glutamate + H(+). It carries out the reaction L-glutamine + H2O = L-glutamate + NH4(+). The protein operates within amino-acid biosynthesis; L-histidine biosynthesis; L-histidine from 5-phospho-alpha-D-ribose 1-diphosphate: step 5/9. In terms of biological role, IGPS catalyzes the conversion of PRFAR and glutamine to IGP, AICAR and glutamate. The HisH subunit catalyzes the hydrolysis of glutamine to glutamate and ammonia as part of the synthesis of IGP and AICAR. The resulting ammonia molecule is channeled to the active site of HisF. The polypeptide is Imidazole glycerol phosphate synthase subunit HisH (Cupriavidus pinatubonensis (strain JMP 134 / LMG 1197) (Cupriavidus necator (strain JMP 134))).